We begin with the raw amino-acid sequence, 523 residues long: Leucine-rich repeat transmembrane neuronal protein 1 (523 aa).

The N-terminal stretch at Met1–Ala34 is a signal peptide. An LRRNT domain is found at Ala35 to Asn63. Residues Ala35 to Lys428 lie on the Extracellular side of the membrane. 2 N-linked (GlcNAc...) asparagine glycosylation sites follow: Asn56 and Asn63. LRR repeat units follow at residues Leu64–Gly87, Met89–Lys111, Leu112–Pro135, Met136–Gly159, Arg161–Asp183, Cys184–Gly207, Phe209–Arg231, Ile233–Val255, Trp256–Thr278, and Pro280–Ser302. N-linked (GlcNAc...) asparagine glycosylation is present at Asn130. The region spanning Asn314–Asp365 is the LRRCT domain. The N-linked (GlcNAc...) asparagine glycan is linked to Asn381. Residues Val429–Val449 traverse the membrane as a helical segment. The Cytoplasmic portion of the chain corresponds to Ser450–Val523. The short motif at Glu520–Val523 is the May be involved in DLG4-binding element.

It belongs to the LRRTM family. As to quaternary structure, interacts with DLG4.

The protein resides in the cell membrane. The protein localises to the postsynaptic cell membrane. Exhibits strong synaptogenic activity, restricted to excitatory presynaptic differentiation, acting at both pre- and postsynaptic level. The sequence is that of Leucine-rich repeat transmembrane neuronal protein 1 (Lrrtm1) from Rattus norvegicus (Rat).